Reading from the N-terminus, the 155-residue chain is UPF0251 protein Paes_1249 (155 aa).

Belongs to the UPF0251 family.

The protein is UPF0251 protein Paes_1249 of Prosthecochloris aestuarii (strain DSM 271 / SK 413).